We begin with the raw amino-acid sequence, 82 residues long: UPF0410 protein YeaQ (82 aa).

A run of 2 helical transmembrane segments spans residues 26-46 (GGGF…GGWI) and 57-77 (GFNF…LFIY).

It belongs to the UPF0410 family.

The protein localises to the cell inner membrane. This chain is UPF0410 protein YeaQ (yeaQ), found in Escherichia coli O157:H7.